The following is a 362-amino-acid chain: tRNA N6-adenosine threonylcarbamoyltransferase (362 aa).

The Fe cation site is built by His-120 and His-124. Substrate contacts are provided by residues 142–146 (LASGG), Asp-175, Gly-188, and Asn-288. Asp-316 is a binding site for Fe cation. Residues 342–351 (RPRWPLDPDA) show a composition bias toward basic and acidic residues. The tract at residues 342–362 (RPRWPLDPDAPKAAGAGGVKA) is disordered.

The protein belongs to the KAE1 / TsaD family. Fe(2+) is required as a cofactor.

It localises to the cytoplasm. The catalysed reaction is L-threonylcarbamoyladenylate + adenosine(37) in tRNA = N(6)-L-threonylcarbamoyladenosine(37) in tRNA + AMP + H(+). In terms of biological role, required for the formation of a threonylcarbamoyl group on adenosine at position 37 (t(6)A37) in tRNAs that read codons beginning with adenine. Is involved in the transfer of the threonylcarbamoyl moiety of threonylcarbamoyl-AMP (TC-AMP) to the N6 group of A37, together with TsaE and TsaB. TsaD likely plays a direct catalytic role in this reaction. This Rhodospirillum rubrum (strain ATCC 11170 / ATH 1.1.1 / DSM 467 / LMG 4362 / NCIMB 8255 / S1) protein is tRNA N6-adenosine threonylcarbamoyltransferase.